Consider the following 133-residue polypeptide: Small ribosomal subunit protein uS19 (133 aa).

It belongs to the universal ribosomal protein uS19 family.

Its function is as follows. Protein S19 forms a complex with S13 that binds strongly to the 16S ribosomal RNA. In Archaeoglobus fulgidus (strain ATCC 49558 / DSM 4304 / JCM 9628 / NBRC 100126 / VC-16), this protein is Small ribosomal subunit protein uS19 (rps19).